The chain runs to 344 residues: Axoneme-associated protein mst101(1) (344 aa).

Tandem repeats lie at residues 74–89 (KKKC…EAAE), 90–105 (KKKC…EAAE), 106–121 (KKKC…EAAE), 122–137 (KKKC…EAAE), 138–153 (KKKC…EAAE), 154–169 (KKKC…EAAE), 170–185 (KKKC…CAEL), 186–201 (AKKE…CAEA), 202–217 (AKKE…CEER), 218–233 (AKKE…CEER), 234–249 (AKKE…CAEA), and 250–265 (AKKE…CAEA). Residues 74 to 344 (KKKCAEAAKK…AAQKKCEPKK (271 aa)) are 17 X 16 AA approximate tandem repeats of K-K-K-C-X-E-X-A-[KQ]-K-X-X-E-X-A-X. Residues 206 to 244 (KEAAEKKKCEERAKKEKEAAEKKKCEERAKKEKEAAEKK) form a disordered region. A 13; approximate repeat occupies 266-281 (AQKKKCAELAKKAKEA). One copy of the 14; approximate repeat lies at 282–297 (AEKKKCAKKAGEKGSK). Positions 285–315 (KKCAKKAGEKGSKQSGSDKGKKNGKKNDMKN) are enriched in basic and acidic residues. Residues 285–318 (KKCAKKAGEKGSKQSGSDKGKKNGKKNDMKNKCA) form a disordered region. The 15; approximate repeat unit spans residues 298–313 (QSGSDKGKKNGKKNDM). Copy 16 of the repeat occupies 314-329 (KNKCAMLAKKAKEEAL). The stretch at 330–344 (KKKCAAAQKKCEPKK) is one 17; truncated repeat.

In terms of tissue distribution, testis. Located in spermatocytes and spermatid bundles.

The protein resides in the cytoplasm. Its function is as follows. Possible structural role in the sperm tail. It is associated with axonemal structures. In Drosophila hydei (Fruit fly), this protein is Axoneme-associated protein mst101(1) (mst101(1)).